The sequence spans 182 residues: Transcription termination/antitermination protein NusG (182 aa).

The protein belongs to the NusG family.

In terms of biological role, participates in transcription elongation, termination and antitermination. This Chlamydia muridarum (strain MoPn / Nigg) protein is Transcription termination/antitermination protein NusG.